A 429-amino-acid chain; its full sequence is Mannose-6-phosphate isomerase (429 aa).

The Zn(2+) site is built by Gln-110, His-112, Glu-137, and His-282. Arg-301 is an active-site residue.

This sequence belongs to the mannose-6-phosphate isomerase type 1 family. Zn(2+) is required as a cofactor.

It localises to the cytoplasm. The enzyme catalyses D-mannose 6-phosphate = D-fructose 6-phosphate. It participates in nucleotide-sugar biosynthesis; GDP-alpha-D-mannose biosynthesis; alpha-D-mannose 1-phosphate from D-fructose 6-phosphate: step 1/2. In terms of biological role, involved in the synthesis of the GDP-mannose and dolichol-phosphate-mannose required for a number of critical mannosyl transfer reactions. This is Mannose-6-phosphate isomerase (PMI1) from Candida glabrata (strain ATCC 2001 / BCRC 20586 / JCM 3761 / NBRC 0622 / NRRL Y-65 / CBS 138) (Yeast).